The primary structure comprises 332 residues: Phosphate acyltransferase (332 aa).

This sequence belongs to the PlsX family. In terms of assembly, homodimer. Probably interacts with PlsY.

The protein resides in the cytoplasm. It catalyses the reaction a fatty acyl-[ACP] + phosphate = an acyl phosphate + holo-[ACP]. It participates in lipid metabolism; phospholipid metabolism. In terms of biological role, catalyzes the reversible formation of acyl-phosphate (acyl-PO(4)) from acyl-[acyl-carrier-protein] (acyl-ACP). This enzyme utilizes acyl-ACP as fatty acyl donor, but not acyl-CoA. The sequence is that of Phosphate acyltransferase from Thermoanaerobacter pseudethanolicus (strain ATCC 33223 / 39E) (Clostridium thermohydrosulfuricum).